Consider the following 361-residue polypeptide: Ferredoxin--NADP reductase 1 (361 aa).

Asp-44, Gln-52, Tyr-57, Ala-97, Phe-142, Asp-308, and Ser-349 together coordinate FAD.

This sequence belongs to the ferredoxin--NADP reductase type 2 family. As to quaternary structure, homodimer. FAD serves as cofactor.

The enzyme catalyses 2 reduced [2Fe-2S]-[ferredoxin] + NADP(+) + H(+) = 2 oxidized [2Fe-2S]-[ferredoxin] + NADPH. The chain is Ferredoxin--NADP reductase 1 from Cupriavidus necator (strain ATCC 17699 / DSM 428 / KCTC 22496 / NCIMB 10442 / H16 / Stanier 337) (Ralstonia eutropha).